A 586-amino-acid chain; its full sequence is MLRAGRYSKASSVLRAVGGKRPSVCMASRVLTRLYSNGKEDDQVASSSSPSSKPWYLQGTGKPEIDVTSPFVGKIKLPATPVPDTVVNVTEYMRDKLGVTDITCFNTHEAHRPCVKNGYVILGCVKSTRHGARSMIELMRFLKTEYGVLPQKEGGISVQELRKRQKRLQRKGNLTSASAELAGESDWYLIDSKLYDGNGSGVFVHLLTKEKREDLNLEGLYCTSEERGLYQKKVLSPSNDHLPNDDDDNVLAGLKRLALQNSRRYYSSTSSATADYARSSLQGGSNMENSDAPLFSLVDSLAQLPETEELDPQEWIRSLDAKWAFIDLTEKHWQARWLMYRLLYVNRLHALQRAQDGDSANLDHLKRDLTFCYKTLLEYFTLKQAMNGRLNKEELVGMLDIMLTQKELNGGYSKLVKHNRVLQQLLDHYKFHEPELFRDEQITIRTLKLMVSSQAKLNVLSEFVRFLRDTGYTNRNVAIKCIEILAEAKEWRELKTFMFRDTTAALLSDPMVWAHFLRSILAHGEPLLWRSLIDDGSILWLVRCGVDVRACEELHSALLELFQRAGYDAVKADSLLRDYIQDGACS.

Residues 1–35 (MLRAGRYSKASSVLRAVGGKRPSVCMASRVLTRLY) constitute a mitochondrion transit peptide. The tract at residues 39 to 59 (KEDDQVASSSSPSSKPWYLQG) is disordered.

It belongs to the ATP25 family.

The protein localises to the mitochondrion inner membrane. In terms of biological role, probable mitochondrial mRNA stabilization factor. This is ATPase synthesis protein 25, mitochondrial (ATP25) from Eremothecium gossypii (strain ATCC 10895 / CBS 109.51 / FGSC 9923 / NRRL Y-1056) (Yeast).